The chain runs to 229 residues: Flagellar L-ring protein (229 aa).

Residues 1–20 (MLKTVLRLPVCAALLALAAG) form the signal peptide. C21 carries the N-palmitoyl cysteine lipid modification. C21 carries S-diacylglycerol cysteine lipidation.

This sequence belongs to the FlgH family. In terms of assembly, the basal body constitutes a major portion of the flagellar organelle and consists of four rings (L,P,S, and M) mounted on a central rod.

The protein localises to the cell outer membrane. It localises to the bacterial flagellum basal body. Its function is as follows. Assembles around the rod to form the L-ring and probably protects the motor/basal body from shearing forces during rotation. The chain is Flagellar L-ring protein from Bordetella pertussis (strain Tohama I / ATCC BAA-589 / NCTC 13251).